Here is a 47-residue protein sequence, read N- to C-terminus: uncharacterized protein (47 aa).

2 disordered regions span residues 1-20 (MSTDNFEKIKGRPTQKEEWQ) and 25-47 (EKEKDENNRLFQEQKQKTTNRKG). A compositionally biased stretch (basic and acidic residues) spans 25–40 (EKEKDENNRLFQEQKQ).

This is an uncharacterized protein from Dictyostelium discoideum (Social amoeba).